The primary structure comprises 445 residues: Tyrosine--tRNA ligase, mitochondrial (445 aa).

Tyr-33 serves as a coordination point for L-tyrosine. Asp-37 is an ATP binding site. Positions 38 to 47 (PTAASLHVGN) match the 'HIGH' region motif. L-tyrosine-binding residues include Asp-77, Tyr-184, Gln-188, Asp-191, and Gln-210. A 'KMSKS' region motif is present at residues 245 to 249 (KLGKS). Lys-248 is an ATP binding site. The 62-residue stretch at 384-445 (QPFSRLLRTL…GKRTFVLDSL (62 aa)) folds into the S4 RNA-binding domain.

It belongs to the class-I aminoacyl-tRNA synthetase family. Homodimer.

Its subcellular location is the mitochondrion matrix. It catalyses the reaction tRNA(Tyr) + L-tyrosine + ATP = L-tyrosyl-tRNA(Tyr) + AMP + diphosphate + H(+). Catalyzes the attachment of tyrosine to tRNA(Tyr) in a two-step reaction: tyrosine is first activated by ATP to form Tyr-AMP and then transferred to the acceptor end of tRNA(Tyr). In Schizosaccharomyces pombe (strain 972 / ATCC 24843) (Fission yeast), this protein is Tyrosine--tRNA ligase, mitochondrial.